The following is a 329-amino-acid chain: Dolichyl-diphosphooligosaccharide--protein glycosyltransferase subunit MAGT1 (329 aa).

The first 23 residues, 1–23 (MAGLKGLLFGGILFAMCGGLSEG), serve as a signal peptide directing secretion. At 24 to 178 (QKKKEMVLSD…DVNIRVIRPP (155 aa)) the chain is on the extracellular side. In terms of domain architecture, Thioredoxin spans 41 to 169 (WASKRPVIRM…LARWVADRTD (129 aa)). N-linked (GlcNAc...) asparagine glycosylation occurs at asparagine 65. Cysteines 81 and 84 form a disulfide. Residues 179–199 (NYAGPLMLGLLLAVIGGLVYL) traverse the membrane as a helical segment. The Cytoplasmic segment spans residues 200-212 (RRSNLDFLNNKTG). Residues 213–233 (WALAALCFVLAMTSGQMWNHI) form a helical membrane-spanning segment. Residues 234–258 (RGPPYAHKNPHTNQVNYIHGSSQAQ) are Extracellular-facing. Residues 259–279 (FVAETHIVLLFNGAVTLGMVL) traverse the membrane as a helical segment. Residues 280-294 (LHEAATSDLDVGKRK) are Cytoplasmic-facing. Residues 295–315 (IMCIAGITLVVIFFSWLLSVF) form a helical membrane-spanning segment. The Extracellular segment spans residues 316–329 (RSKYHGYPYSFLMT).

It belongs to the OST3/OST6 family. In terms of assembly, accessory component of the STT3B-containing form of the oligosaccharyltransferase (OST) complex.

The protein resides in the cell membrane. The protein localises to the endoplasmic reticulum. It localises to the endoplasmic reticulum membrane. The protein operates within protein modification; protein glycosylation. Its function is as follows. Accessory component of the STT3B-containing form of the N-oligosaccharyl transferase (OST) complex which catalyzes the transfer of a high mannose oligosaccharide from a lipid-linked oligosaccharide donor to an asparagine residue within an Asn-X-Ser/Thr consensus motif in nascent polypeptide chains. May be involved in substrate-specific N-glycosylation involving acceptor sites that are near cysteine residues. Could indirectly play a role in Mg(2+) transport in epithelial cells. The sequence is that of Dolichyl-diphosphooligosaccharide--protein glycosyltransferase subunit MAGT1 from Xenopus laevis (African clawed frog).